The following is a 269-amino-acid chain: Hydroxyethylthiazole kinase (269 aa).

Met-42 lines the substrate pocket. ATP-binding residues include Arg-118 and Ser-164. Gly-191 contacts substrate.

Belongs to the Thz kinase family. It depends on Mg(2+) as a cofactor.

It catalyses the reaction 5-(2-hydroxyethyl)-4-methylthiazole + ATP = 4-methyl-5-(2-phosphooxyethyl)-thiazole + ADP + H(+). The protein operates within cofactor biosynthesis; thiamine diphosphate biosynthesis; 4-methyl-5-(2-phosphoethyl)-thiazole from 5-(2-hydroxyethyl)-4-methylthiazole: step 1/1. In terms of biological role, catalyzes the phosphorylation of the hydroxyl group of 4-methyl-5-beta-hydroxyethylthiazole (THZ). In Listeria monocytogenes serotype 4a (strain HCC23), this protein is Hydroxyethylthiazole kinase.